Here is a 285-residue protein sequence, read N- to C-terminus: HTH-type transcriptional regulator MurR (285 aa).

Residues Met1–Ser77 form the HTH rpiR-type domain. Residues Ser37 to Gln56 constitute a DNA-binding region (H-T-H motif). One can recognise an SIS domain in the interval Ile128–Val268.

As to quaternary structure, homotetramer.

It participates in amino-sugar metabolism; N-acetylmuramate degradation [regulation]. Functionally, represses the expression of the murPQ operon involved in the uptake and degradation of N-acetylmuramic acid (MurNAc). Binds to two adjacent inverted repeats within the operator region. MurNAc 6-phosphate, the substrate of MurQ, is the specific inducer that weakens binding of MurR to the operator. This Escherichia coli (strain B / BL21-DE3) protein is HTH-type transcriptional regulator MurR.